We begin with the raw amino-acid sequence, 742 residues long: Collectin-12 (742 aa).

Topologically, residues 1-37 (MKDDFAEEEEVQSFGYKRFGIQEGTQCTKCKNNWALK) are cytoplasmic. Residues 38 to 58 (FSIILLYVLCALLTITVAILG) form a helical; Signal-anchor for type II membrane protein membrane-spanning segment. The Extracellular portion of the chain corresponds to 59-742 (YKVVEKMDTV…EREAVPSSIL (684 aa)). Residues 104-142 (TNSELSTFRSDILDLRQQLQEITEKTSKNKDMLEKLQAN) are a coiled coil. Residues Asn159, Asn168, and Asn271 are each glycosylated (N-linked (GlcNAc...) asparagine). A coiled-coil region spans residues 220–301 (ITNLQRSVDD…SFTGQMDNIT (82 aa)). Residues 439 to 608 (TILQGPPGPR…TPASEVNGCP (170 aa)) are disordered. 2 Collagen-like domains span residues 452-511 (GDRG…KGSR) and 527-586 (GPPG…PGPS). Low complexity predominate over residues 501-514 (SKGSQGPKGSRGSP). The segment covering 516-532 (KPGPQGPSGDPGPPGPP) has biased composition (pro residues). Residues 534–556 (KDGLPGPQGPPGFQGLQGTVGEP) are compositionally biased toward low complexity. Over residues 571–585 (PGMPGPKGPPGPPGP) the composition is skewed to pro residues. Disulfide bonds link Cys607-Cys618, Cys635-Cys730, and Cys708-Cys722. The 118-residue stretch at 614–731 (FTDKCYYFSV…CDEINNFICE (118 aa)) folds into the C-type lectin domain. 5 residues coordinate Ca(2+): Phe644, Asn646, Glu650, Asp670, and Glu674. Lys691, Gln694, and Asp696 together coordinate a carbohydrate. 8 residues coordinate Ca(2+): Gln694, Asp696, Asn697, Glu706, Asp707, Asn718, Asp719, and Glu731. Glu706 provides a ligand contact to a carbohydrate. The a carbohydrate site is built by Asn718 and Asp719.

In terms of assembly, the extracellular domain forms a stable trimer. The extracellular domain interacts with fibrillar amyloid-beta peptide. Highly expressed in lung, spleen, small and large intestine, stomach and brain. Expressed in neonatal microglia.

Its subcellular location is the membrane. Scavenger receptor that displays several functions associated with host defense. Promotes binding and phagocytosis of Gram-positive, Gram-negative bacteria and yeast. Mediates the recognition, internalization and degradation of oxidatively modified low density lipoprotein (oxLDL) by vascular endothelial cells. Binds to several carbohydrates including Gal-type ligands, D-galactose, L- and D-fucose, GalNAc, T and Tn antigens in a calcium-dependent manner and internalizes specifically GalNAc in nurse-like cells. Also binds to sialyl Lewis X or a trisaccharide and asialo-orosomucoid (ASOR). This chain is Collectin-12 (Colec12), found in Rattus norvegicus (Rat).